Reading from the N-terminus, the 180-residue chain is Large ribosomal subunit protein uL5 (180 aa).

It belongs to the universal ribosomal protein uL5 family. In terms of assembly, part of the 50S ribosomal subunit; part of the 5S rRNA/L5/L18/L25 subcomplex. Contacts the 5S rRNA and the P site tRNA. Forms a bridge to the 30S subunit in the 70S ribosome.

Functionally, this is one of the proteins that bind and probably mediate the attachment of the 5S RNA into the large ribosomal subunit, where it forms part of the central protuberance. In the 70S ribosome it contacts protein S13 of the 30S subunit (bridge B1b), connecting the 2 subunits; this bridge is implicated in subunit movement. Contacts the P site tRNA; the 5S rRNA and some of its associated proteins might help stabilize positioning of ribosome-bound tRNAs. In Lactobacillus delbrueckii subsp. bulgaricus (strain ATCC 11842 / DSM 20081 / BCRC 10696 / JCM 1002 / NBRC 13953 / NCIMB 11778 / NCTC 12712 / WDCM 00102 / Lb 14), this protein is Large ribosomal subunit protein uL5.